Consider the following 480-residue polypeptide: MATAANQIGRITQVIGAVVDVQFEGHLPAILNSLETKNAGNRLVLEVAQHLGESTVRTIAMDTTEGLVRGQEVTDTGAPIRVPVGEGTLGRIINVIGEPIDEAGPVKADSLRAIHQEAPSYTDQSTEAEILVTGIKVVDLLAPYAKGGKIGLFGGAGVGKTVLIQELINNVAKAHGGYSVFAGVGERTREGNDLYHEFIESKVNADPHNPDPSVKSKCALVFGQMNEPPGARARVALTGLTIAEDFRDKGQDVLFFVDNIFRFTQAGSEVSALLGRIPSAVGYQPTLATDMGALQERITTTTKGSITSVQAIYVPADDLTDPAPATSFAHLDATTTLSRSIAEKGIYPAVDPLDSTSRMLSPLVVGEEHYAVARQVQQVLQRYKALQDIIAILGMDELSEEDKLTVARARKVERFMSQPFHVAEIFTGSPGKFVELADTIKGFKGLVEGKYDHLPEAAFYMVGTIEEAVEKGKKLAAEAA.

154-161 contributes to the ATP binding site; it reads GGAGVGKT.

Belongs to the ATPase alpha/beta chains family. F-type ATPases have 2 components, CF(1) - the catalytic core - and CF(0) - the membrane proton channel. CF(1) has five subunits: alpha(3), beta(3), gamma(1), delta(1), epsilon(1). CF(0) has four main subunits: a(1), b(1), b'(1) and c(9-12).

It is found in the cell inner membrane. The enzyme catalyses ATP + H2O + 4 H(+)(in) = ADP + phosphate + 5 H(+)(out). Produces ATP from ADP in the presence of a proton gradient across the membrane. The catalytic sites are hosted primarily by the beta subunits. This is ATP synthase subunit beta 1 from Bradyrhizobium sp. (strain BTAi1 / ATCC BAA-1182).